Reading from the N-terminus, the 90-residue chain is DNA-binding protein HU (90 aa).

It belongs to the bacterial histone-like protein family. As to quaternary structure, homodimer.

In terms of biological role, histone-like DNA-binding protein which is capable of wrapping DNA to stabilize it, and thus to prevent its denaturation under extreme environmental conditions. The polypeptide is DNA-binding protein HU (hup) (Pasteurella multocida (strain Pm70)).